A 66-amino-acid polypeptide reads, in one-letter code: Large ribosomal subunit protein uL29 (66 aa).

Belongs to the universal ribosomal protein uL29 family.

In Petrotoga mobilis (strain DSM 10674 / SJ95), this protein is Large ribosomal subunit protein uL29.